We begin with the raw amino-acid sequence, 548 residues long: Thermolysin (548 aa).

A signal peptide spans 1–28 (MKMKMKLASFGLAAGLAAQVFLPYNALA). A propeptide spans 29–232 (STEHVTWNQQ…DAAKPGDVKS (204 aa)) (activation peptide). Residues D289, D291, Q293, and D370 each contribute to the Ca(2+) site. Residue H374 coordinates Zn(2+). Residue E375 is part of the active site. The Zn(2+) site is built by H378 and E398. Residues E409, N415, D417, E419, E422, Y425, T426, I429, and D432 each contribute to the Ca(2+) site. H463 serves as the catalytic Proton donor.

The protein belongs to the peptidase M4 family. Requires Ca(2+) as cofactor. The cofactor is Zn(2+).

Its subcellular location is the secreted. It catalyses the reaction Preferential cleavage: Xaa-|-Leu &gt; Xaa-|-Phe.. In terms of biological role, extracellular zinc metalloprotease. The polypeptide is Thermolysin (npr) (Bacillus thermoproteolyticus).